The following is a 578-amino-acid chain: Poly(A) RNA polymerase cid13 (578 aa).

Positions 110 and 112 each coordinate Mg(2+). Residues 275–330 (SLGILFVEFFRFFGYLFDYEHFVLSIRHGTFLSKRAKGWQFQLNNFLCVEEPFHTS) enclose the PAP-associated domain. A disordered region spans residues 495–565 (SHHFDERHGG…SEVVSPVSLH (71 aa)). Residues 496–510 (HHFDERHGGDRHEKN) show a composition bias toward basic and acidic residues. Positions 516-527 (RYSRNKFHKKKQ) are enriched in basic residues. Over residues 547–565 (NSPPSNSSSSEVVSPVSLH) the composition is skewed to low complexity.

It belongs to the DNA polymerase type-B-like family. Interacts with pab1. Mg(2+) is required as a cofactor. Mn(2+) serves as cofactor.

The protein localises to the cytoplasm. Its subcellular location is the nucleus. The enzyme catalyses RNA(n) + ATP = RNA(n)-3'-adenine ribonucleotide + diphosphate. Polymerase that creates the 3' poly(A) tail of suc22 mRNA. The chain is Poly(A) RNA polymerase cid13 (cid13) from Schizosaccharomyces pombe (strain 972 / ATCC 24843) (Fission yeast).